The primary structure comprises 703 residues: WPP domain-interacting tail-anchored protein 1 (703 aa).

Basic and acidic residues predominate over residues M1–S12. 2 disordered regions span residues M1 to K27 and F86 to S107. The segment covering E92–S107 has biased composition (acidic residues). Residues S118–Q183 are a coiled coil. The interval R189–S208 is disordered. Positions G198–S208 are enriched in polar residues. Coiled-coil stretches lie at residues L236 to Y265, K318 to G461, and S500 to N604. A helical membrane pass occupies residues F679–S699.

In terms of assembly, homodimer. Component of Ran complexes at least composed of WIT1 or WIT2, RANGAP1 or RANGAP2, and WIP1 or WIP2 or WIP3. Interacts with WIP2, WPP1/MAF1, WPP2/MAF2, RANGAP1 and RANGAP2. Component of a ternary complex composed of WPP1, HSP70-1 and WIT1. Interacts with KAKU1. Interacts with WIP1. As to expression, ubiquitous.

The protein resides in the nucleus envelope. Its subcellular location is the nucleus membrane. Functionally, together with WIT2, required for the nuclear envelope docking of RANGAP proteins in root tips. The polypeptide is WPP domain-interacting tail-anchored protein 1 (WIT1) (Arabidopsis thaliana (Mouse-ear cress)).